We begin with the raw amino-acid sequence, 496 residues long: Hexokinase-1 (496 aa).

The helical transmembrane segment at 4–24 (VAVGATVVCTAAVCAVAVLVV) threads the bilayer. A Hexokinase domain is found at 35-487 (GRVLAILKAF…SGIGAALLAA (453 aa)). A hexokinase small subdomain region spans residues 90-228 (SGDEKGLFYA…GLDMRIAALV (139 aa)). Gly-104, Thr-105, and Asn-106 together coordinate ADP. Residues Thr-194, Lys-195, Asn-229, and Asp-230 each contribute to the D-glucose site. Positions 229–476 (NDTVGTLAGG…GSVEVTHSND (248 aa)) are hexokinase large subdomain. Residue Thr-253 participates in ADP binding. 3 residues coordinate D-glucose: Asn-256, Glu-284, and Glu-315. ADP is bound at residue Gly-441.

This sequence belongs to the hexokinase family. As to quaternary structure, interacts with RPT5B in nucleus. Interacts with RHIP1. Interacts with KING1 in mitochondria. Interacts with CLF (via SANT domain) and EZA1/SWN (via SANT domain) in nucleus. As to expression, highly expressed in flowers and siliques, at intermediate levels in roots and stems, and at lower levels in rosette and cauline leaves.

The protein resides in the mitochondrion outer membrane. It localises to the nucleus. The catalysed reaction is a D-hexose + ATP = a D-hexose 6-phosphate + ADP + H(+). It catalyses the reaction D-fructose + ATP = D-fructose 6-phosphate + ADP + H(+). The enzyme catalyses D-glucose + ATP = D-glucose 6-phosphate + ADP + H(+). Its pathway is carbohydrate metabolism; hexose metabolism. It participates in carbohydrate degradation; glycolysis; D-glyceraldehyde 3-phosphate and glycerone phosphate from D-glucose: step 1/4. Functionally, fructose and glucose phosphorylating enzyme. May be involved in the phosphorylation of glucose during the export from mitochondrion to cytosol. Acts as a sugar sensor which may regulate sugar-dependent gene repression or activation. Mediates the effects of sugar on plant growth and development independently of its catalytic activity or the sugar metabolism. May regulate the execution of program cell death in plant cells. Promotes roots and leaves growth. Together with sugar, is involved in the regulation of the expression of aquaporin genes, and reduces leaf water conductance, to coordinate sugar levels with the loss of water through transpiration. Regulates cell proliferation and expansion early during leaf development. Involved in sucrose-induced leaf growth stimulation independently of GPT2. May participate to the stimulation of hypocotyl elongation under long-day (LD) conditions. Forms a nuclear complex with CLF and EZA1/SWN to target common glucose-responsive genes and regulate glucose signaling. Is required for CLF- and EZA1/SWN-mediated histone H3 trimethylation on 'Lys-27' (H3K27me3) and glucose-mediated gene repression. The sequence is that of Hexokinase-1 from Arabidopsis thaliana (Mouse-ear cress).